A 159-amino-acid polypeptide reads, in one-letter code: Probable minor fimbrial protein (159 aa).

Positions 1–6 (MKKMHG) are cleaved as a propeptide — leader sequence. Phe-7 is subject to N-methylphenylalanine. The chain crosses the membrane as a helical span at residues 7–27 (FTLIELMIVVAIIGVLASTAL). Disulfide bonds link Cys-56-Cys-71 and Cys-140-Cys-153.

This sequence belongs to the N-Me-Phe pilin family. In terms of assembly, the pili are polar flexible filaments of about 5.4 nanometers diameter and 2.5 micrometers average length; they consist of only a single polypeptide chain arranged in a helical configuration of five subunits per turn in the assembled pilus.

It is found in the fimbrium. Its subcellular location is the membrane. In Dichelobacter nodosus (Bacteroides nodosus), this protein is Probable minor fimbrial protein (fimZ).